A 170-amino-acid polypeptide reads, in one-letter code: MALLLSDWCPDGDADTHTGTDPGRTTHRLCARERGVRGTQPCPRIYLRLPAQNCEETRFCCASPGSVVLGHGAPRTASPPSALSHPSPLEGLSFSPFPPSVLSHPSPPEGLSFSLFHCLCSGKLSESPGCFWNSLGWSFSVLTEPGVWKVGEAIWVAENLAQPLTSPCAC.

This is an uncharacterized protein from Homo sapiens (Human).